Consider the following 311-residue polypeptide: N-acetylmuramic acid 6-phosphate etherase (311 aa).

One can recognise an SIS domain in the interval 66–230 (VVEAFEADGR…TTAAMVRLGK (165 aa)). Glu-94 acts as the Proton donor in catalysis. Residue Glu-125 is part of the active site.

It belongs to the GCKR-like family. MurNAc-6-P etherase subfamily. In terms of assembly, homodimer.

It catalyses the reaction N-acetyl-D-muramate 6-phosphate + H2O = N-acetyl-D-glucosamine 6-phosphate + (R)-lactate. It functions in the pathway amino-sugar metabolism; N-acetylmuramate degradation. Functionally, specifically catalyzes the cleavage of the D-lactyl ether substituent of MurNAc 6-phosphate, producing GlcNAc 6-phosphate and D-lactate. This chain is N-acetylmuramic acid 6-phosphate etherase, found in Salinibacter ruber (strain DSM 13855 / M31).